The sequence spans 213 residues: Probable septum site-determining protein MinC (213 aa).

The protein belongs to the MinC family. Interacts with MinD and FtsZ.

In terms of biological role, cell division inhibitor that blocks the formation of polar Z ring septums. Rapidly oscillates between the poles of the cell to destabilize FtsZ filaments that have formed before they mature into polar Z rings. Prevents FtsZ polymerization. In Pseudothermotoga lettingae (strain ATCC BAA-301 / DSM 14385 / NBRC 107922 / TMO) (Thermotoga lettingae), this protein is Probable septum site-determining protein MinC.